Reading from the N-terminus, the 189-residue chain is Threonylcarbamoyl-AMP synthase (189 aa).

One can recognise a YrdC-like domain in the interval 6–189 (TAIFTPIIDA…VLTGEQIRQG (184 aa)).

The protein belongs to the SUA5 family. TsaC subfamily.

It is found in the cytoplasm. The catalysed reaction is L-threonine + hydrogencarbonate + ATP = L-threonylcarbamoyladenylate + diphosphate + H2O. In terms of biological role, required for the formation of a threonylcarbamoyl group on adenosine at position 37 (t(6)A37) in tRNAs that read codons beginning with adenine. Catalyzes the conversion of L-threonine, HCO(3)(-)/CO(2) and ATP to give threonylcarbamoyl-AMP (TC-AMP) as the acyladenylate intermediate, with the release of diphosphate. This is Threonylcarbamoyl-AMP synthase from Serratia proteamaculans (strain 568).